The sequence spans 534 residues: Bifunctional purine biosynthesis protein PurH (534 aa).

The 146-residue stretch at 6–151 (TRLPIRRALI…KNHKDVAIVV (146 aa)) folds into the MGS-like domain.

It belongs to the PurH family.

The enzyme catalyses (6R)-10-formyltetrahydrofolate + 5-amino-1-(5-phospho-beta-D-ribosyl)imidazole-4-carboxamide = 5-formamido-1-(5-phospho-D-ribosyl)imidazole-4-carboxamide + (6S)-5,6,7,8-tetrahydrofolate. The catalysed reaction is IMP + H2O = 5-formamido-1-(5-phospho-D-ribosyl)imidazole-4-carboxamide. The protein operates within purine metabolism; IMP biosynthesis via de novo pathway; 5-formamido-1-(5-phospho-D-ribosyl)imidazole-4-carboxamide from 5-amino-1-(5-phospho-D-ribosyl)imidazole-4-carboxamide (10-formyl THF route): step 1/1. Its pathway is purine metabolism; IMP biosynthesis via de novo pathway; IMP from 5-formamido-1-(5-phospho-D-ribosyl)imidazole-4-carboxamide: step 1/1. The sequence is that of Bifunctional purine biosynthesis protein PurH from Pseudomonas syringae pv. tomato (strain ATCC BAA-871 / DC3000).